The primary structure comprises 338 residues: Lipoate-protein ligase A (338 aa).

The region spanning 29–216 (PTTQRVLFLW…AFFDYFGEQC (188 aa)) is the BPL/LPL catalytic domain. Residues arginine 71, 76-79 (GAVF), and lysine 134 contribute to the ATP site. Lysine 134 is a binding site for (R)-lipoate.

Belongs to the LplA family. In terms of assembly, monomer.

The protein resides in the cytoplasm. It carries out the reaction L-lysyl-[lipoyl-carrier protein] + (R)-lipoate + ATP = N(6)-[(R)-lipoyl]-L-lysyl-[lipoyl-carrier protein] + AMP + diphosphate + H(+). The protein operates within protein modification; protein lipoylation via exogenous pathway; protein N(6)-(lipoyl)lysine from lipoate: step 1/2. It functions in the pathway protein modification; protein lipoylation via exogenous pathway; protein N(6)-(lipoyl)lysine from lipoate: step 2/2. Catalyzes both the ATP-dependent activation of exogenously supplied lipoate to lipoyl-AMP and the transfer of the activated lipoyl onto the lipoyl domains of lipoate-dependent enzymes. The polypeptide is Lipoate-protein ligase A (Pectobacterium carotovorum subsp. carotovorum (strain PC1)).